The following is a 1563-amino-acid chain: DNA-directed RNA polymerase subunit beta' (1563 aa).

4 residues coordinate Zn(2+): cysteine 61, cysteine 63, cysteine 76, and cysteine 79. Aspartate 588, aspartate 590, and aspartate 592 together coordinate Mg(2+). 4 residues coordinate Zn(2+): cysteine 925, cysteine 999, cysteine 1006, and cysteine 1009.

The protein belongs to the RNA polymerase beta' chain family. In terms of assembly, the RNAP catalytic core consists of 2 alpha, 1 beta, 1 beta' and 1 omega subunit. When a sigma factor is associated with the core the holoenzyme is formed, which can initiate transcription. Mg(2+) is required as a cofactor. Zn(2+) serves as cofactor.

It catalyses the reaction RNA(n) + a ribonucleoside 5'-triphosphate = RNA(n+1) + diphosphate. In terms of biological role, DNA-dependent RNA polymerase catalyzes the transcription of DNA into RNA using the four ribonucleoside triphosphates as substrates. This Hydrogenobaculum sp. (strain Y04AAS1) protein is DNA-directed RNA polymerase subunit beta'.